A 140-amino-acid chain; its full sequence is Neurotrophin-7 (140 aa).

Positions 1–7 (PGPRVRR) are excised as a propeptide. 3 disulfides stabilise this stretch: Cys21/Cys101, Cys64/Cys129, and Cys89/Cys131.

This sequence belongs to the NGF-beta family.

The protein resides in the secreted. In Cyprinus carpio (Common carp), this protein is Neurotrophin-7 (ntf7).